Here is a 366-residue protein sequence, read N- to C-terminus: Chorismate synthase (366 aa).

Position 48 (R48) interacts with NADP(+). FMN contacts are provided by residues 125-127 (RSS), 241-242 (NA), G285, 300-304 (KPTSS), and R326.

This sequence belongs to the chorismate synthase family. Homotetramer. FMNH2 is required as a cofactor.

The enzyme catalyses 5-O-(1-carboxyvinyl)-3-phosphoshikimate = chorismate + phosphate. It functions in the pathway metabolic intermediate biosynthesis; chorismate biosynthesis; chorismate from D-erythrose 4-phosphate and phosphoenolpyruvate: step 7/7. Functionally, catalyzes the anti-1,4-elimination of the C-3 phosphate and the C-6 proR hydrogen from 5-enolpyruvylshikimate-3-phosphate (EPSP) to yield chorismate, which is the branch point compound that serves as the starting substrate for the three terminal pathways of aromatic amino acid biosynthesis. This reaction introduces a second double bond into the aromatic ring system. The polypeptide is Chorismate synthase (Paracoccus denitrificans (strain Pd 1222)).